Reading from the N-terminus, the 115-residue chain is uncharacterized protein (115 aa).

This is an uncharacterized protein from Acidianus sp. F28 (AFV-2).